We begin with the raw amino-acid sequence, 542 residues long: CTP synthase (542 aa).

The segment at M1–M265 is amidoligase domain. S13 serves as a coordination point for CTP. S13 serves as a coordination point for UTP. Residues S14 to L19 and D71 contribute to the ATP site. D71 and E139 together coordinate Mg(2+). CTP-binding positions include D146–E148, K186–Q191, and K222. UTP contacts are provided by residues K186 to Q191 and K222. R238 to V240 serves as a coordination point for ATP. Residues T291 to L541 enclose the Glutamine amidotransferase type-1 domain. Residue G353 coordinates L-glutamine. The active-site Nucleophile; for glutamine hydrolysis is the C380. L-glutamine contacts are provided by residues F381–Q384, E404, and R469. Catalysis depends on residues H514 and E516.

It belongs to the CTP synthase family. In terms of assembly, homotetramer.

The catalysed reaction is UTP + L-glutamine + ATP + H2O = CTP + L-glutamate + ADP + phosphate + 2 H(+). The enzyme catalyses L-glutamine + H2O = L-glutamate + NH4(+). It carries out the reaction UTP + NH4(+) + ATP = CTP + ADP + phosphate + 2 H(+). The protein operates within pyrimidine metabolism; CTP biosynthesis via de novo pathway; CTP from UDP: step 2/2. Its activity is regulated as follows. Allosterically activated by GTP, when glutamine is the substrate; GTP has no effect on the reaction when ammonia is the substrate. The allosteric effector GTP functions by stabilizing the protein conformation that binds the tetrahedral intermediate(s) formed during glutamine hydrolysis. Inhibited by the product CTP, via allosteric rather than competitive inhibition. Functionally, catalyzes the ATP-dependent amination of UTP to CTP with either L-glutamine or ammonia as the source of nitrogen. Regulates intracellular CTP levels through interactions with the four ribonucleotide triphosphates. This is CTP synthase from Methylorubrum extorquens (strain CM4 / NCIMB 13688) (Methylobacterium extorquens).